Reading from the N-terminus, the 146-residue chain is 3-hydroxyacyl-[acyl-carrier-protein] dehydratase FabZ (146 aa).

His-47 is a catalytic residue.

Belongs to the thioester dehydratase family. FabZ subfamily.

Its subcellular location is the cytoplasm. It carries out the reaction a (3R)-hydroxyacyl-[ACP] = a (2E)-enoyl-[ACP] + H2O. Functionally, involved in unsaturated fatty acids biosynthesis. Catalyzes the dehydration of short chain beta-hydroxyacyl-ACPs and long chain saturated and unsaturated beta-hydroxyacyl-ACPs. This chain is 3-hydroxyacyl-[acyl-carrier-protein] dehydratase FabZ, found in Nitrosospira multiformis (strain ATCC 25196 / NCIMB 11849 / C 71).